The following is an 80-amino-acid chain: Exodeoxyribonuclease 7 small subunit (80 aa).

The protein belongs to the XseB family. In terms of assembly, heterooligomer composed of large and small subunits.

It localises to the cytoplasm. It catalyses the reaction Exonucleolytic cleavage in either 5'- to 3'- or 3'- to 5'-direction to yield nucleoside 5'-phosphates.. Bidirectionally degrades single-stranded DNA into large acid-insoluble oligonucleotides, which are then degraded further into small acid-soluble oligonucleotides. This is Exodeoxyribonuclease 7 small subunit from Pseudomonas paraeruginosa (strain DSM 24068 / PA7) (Pseudomonas aeruginosa (strain PA7)).